A 413-amino-acid chain; its full sequence is Probable protein phosphatase 2C 78 (413 aa).

Residues 21–40 are disordered; that stretch reads KKATTTTRRRERSSSQAARR. Residues 111-409 enclose the PPM-type phosphatase domain; it reads KYGVASVCGR…DNVSVVVVDL (299 aa). 4 residues coordinate Mn(2+): D153, G154, D327, and D400.

It belongs to the PP2C family. It depends on Mg(2+) as a cofactor. Mn(2+) is required as a cofactor.

It is found in the golgi apparatus. It localises to the nucleus. It carries out the reaction O-phospho-L-seryl-[protein] + H2O = L-seryl-[protein] + phosphate. The catalysed reaction is O-phospho-L-threonyl-[protein] + H2O = L-threonyl-[protein] + phosphate. Acts as a negative regulator of abscisic acid (ABA) signaling for stomatal closure in leaves, and controls water loss during leaf senescence. Activated by the NAC029/NAP transcription factor during ABA signaling in senescing leaves. Functions as a negative regulator of osmotic stress and ABA signaling. Acts as a negative regulator of response to drought. This Arabidopsis thaliana (Mouse-ear cress) protein is Probable protein phosphatase 2C 78.